The sequence spans 438 residues: Trigger factor (438 aa).

In terms of domain architecture, PPIase FKBP-type spans Asp-160–Pro-245.

The protein belongs to the FKBP-type PPIase family. Tig subfamily.

It is found in the cytoplasm. It carries out the reaction [protein]-peptidylproline (omega=180) = [protein]-peptidylproline (omega=0). Its function is as follows. Involved in protein export. Acts as a chaperone by maintaining the newly synthesized protein in an open conformation. Functions as a peptidyl-prolyl cis-trans isomerase. This is Trigger factor from Francisella tularensis subsp. novicida (strain U112).